We begin with the raw amino-acid sequence, 200 residues long: LHFPL tetraspan subfamily member 6 protein (200 aa).

The N-terminal stretch at 1–23 is a signal peptide; that stretch reads MASSLTCTGVIWALLSFLSAATS. A run of 3 helical transmembrane segments spans residues 84–104, 123–143, and 166–186; these read ICTI…LTAL, GIQF…PLGW, and IGWA…LCTW.

Belongs to the LHFP family.

It localises to the membrane. This is LHFPL tetraspan subfamily member 6 protein from Rattus norvegicus (Rat).